We begin with the raw amino-acid sequence, 42 residues long: Photosystem I reaction center subunit IX (42 aa).

The helical transmembrane segment at 7-27 (YLSAAPVLSTLWLGALAALLI) threads the bilayer.

The protein belongs to the PsaJ family.

The protein resides in the plastid membrane. In terms of biological role, may help in the organization of the PsaE and PsaF subunits. The sequence is that of Photosystem I reaction center subunit IX from Cuscuta reflexa (Southern Asian dodder).